The chain runs to 176 residues: Mitochondrial inner membrane protein Mpv17 (176 aa).

A run of 4 helical transmembrane segments spans residues 18 to 38 (VQVL…QQLV), 53 to 73 (TMAS…YRVL), 94 to 114 (GGFA…LNGL), and 131 to 151 (LITN…LVPL).

This sequence belongs to the peroxisomal membrane protein PXMP2/4 family.

The protein resides in the mitochondrion inner membrane. Functionally, non-selective channel that modulates the membrane potential under normal conditions and oxidative stress, and is involved in mitochondrial homeostasis. Involved in mitochondrial deoxynucleoside triphosphates (dNTP) pool homeostasis and mitochondrial DNA (mtDNA) maintenance. May be involved in the regulation of reactive oxygen species metabolism and the control of oxidative phosphorylation. The chain is Mitochondrial inner membrane protein Mpv17 from Bos taurus (Bovine).